A 467-amino-acid chain; its full sequence is Dynactin subunit 4 (467 aa).

Ala-2 bears the N-acetylalanine mark. A Glycyl lysine isopeptide (Lys-Gly) (interchain with G-Cter in SUMO2) cross-link involves residue Lys-222. Position 414 is a phosphothreonine (Thr-414).

It belongs to the dynactin subunit 4 family. Subunit of dynactin, a multiprotein complex part of a tripartite complex with dynein and a adapter, such as BICDL1, BICD2 or HOOK3. The dynactin complex is built around ACTR1A/ACTB filament and consists of an actin-related filament composed of a shoulder domain, a pointed end and a barbed end. Its length is defined by its flexible shoulder domain. The soulder is composed of 2 DCTN1 subunits, 4 DCTN2 and 2 DCTN3. The 4 DCNT2 (via N-terminus) bind the ACTR1A filament and act as molecular rulers to determine the length. The pointed end is important for binding dynein-dynactin cargo adapters. Consists of 4 subunits: ACTR10, DCNT4, DCTN5 and DCTN6. The barbed end is composed of a CAPZA1:CAPZB heterodimers, which binds ACTR1A/ACTB filament and dynactin and stabilizes dynactin. Interacts with ATP7B, but not ATP7A, in a copper-dependent manner. Interacts with ANK2; this interaction is required for localization at costameres. Interacts with N4BP2L1.

It localises to the cytoplasm. The protein localises to the cytoskeleton. Its subcellular location is the microtubule organizing center. It is found in the centrosome. The protein resides in the stress fiber. It localises to the cell cortex. The protein localises to the myofibril. Its subcellular location is the sarcomere. Its function is as follows. Part of the dynactin complex that activates the molecular motor dynein for ultra-processive transport along microtubules. Together with dynein is involved in spindle assembly and cytokinesis. This is Dynactin subunit 4 (DCTN4) from Sus scrofa (Pig).